Consider the following 69-residue polypeptide: Large ribosomal subunit protein uL29 (69 aa).

It belongs to the universal ribosomal protein uL29 family.

This chain is Large ribosomal subunit protein uL29, found in Staphylococcus haemolyticus (strain JCSC1435).